We begin with the raw amino-acid sequence, 508 residues long: Hydroxymethylglutaryl-CoA synthase, mitochondrial (508 aa).

The transit peptide at 1 to 37 (MQRLLTPVRQVLRVKRAMQEASFMPPLLPPAAHQRFS) directs the protein to the mitochondrion. Lys-52 is subject to N6-succinyllysine. (3S)-3-hydroxy-3-methylglutaryl-CoA contacts are provided by Glu-80 and Ala-81. The active-site Proton donor/acceptor is Glu-132. Residues Cys-166, Asn-204, and Thr-208 each coordinate (3S)-3-hydroxy-3-methylglutaryl-CoA. The Acyl-thioester intermediate role is filled by Cys-166. Residue Lys-243 is modified to N6-acetyllysine. N6-acetyllysine; alternate is present on Lys-256. Position 256 is an N6-succinyllysine; alternate (Lys-256). Residues Ser-258 and His-301 each coordinate (3S)-3-hydroxy-3-methylglutaryl-CoA. The Proton donor/acceptor role is filled by His-301. An N6-acetyllysine modification is found at Lys-306. Residue Lys-310 participates in (3S)-3-hydroxy-3-methylglutaryl-CoA binding. At Lys-310 the chain carries N6-acetyllysine; alternate. The residue at position 310 (Lys-310) is an N6-succinyllysine; alternate. Lys-333 is subject to N6-succinyllysine. An N6-acetyllysine; alternate mark is found at Lys-342, Lys-350, Lys-354, and Lys-358. N6-succinyllysine; alternate is present on residues Lys-342, Lys-350, Lys-354, and Lys-358. The (3S)-3-hydroxy-3-methylglutaryl-CoA site is built by Asn-380 and Ser-414. At Ser-433 the chain carries Phosphoserine. At Lys-437 the chain carries N6-acetyllysine. Phosphoserine is present on residues Ser-440 and Ser-456. Lys-473 carries the post-translational modification N6-acetyllysine; alternate. Lys-473 is subject to N6-succinyllysine; alternate.

It belongs to the thiolase-like superfamily. HMG-CoA synthase family. In terms of assembly, homodimer. In terms of processing, succinylated. Desuccinylated by SIRT5. Succinylation, at least at Lys-310, inhibits the enzymatic activity.

Its subcellular location is the mitochondrion. The enzyme catalyses acetoacetyl-CoA + acetyl-CoA + H2O = (3S)-3-hydroxy-3-methylglutaryl-CoA + CoA + H(+). Its pathway is metabolic intermediate biosynthesis; (R)-mevalonate biosynthesis; (R)-mevalonate from acetyl-CoA: step 2/3. Its function is as follows. Catalyzes the first irreversible step in ketogenesis, condensing acetyl-CoA to acetoacetyl-CoA to form HMG-CoA, which is converted by HMG-CoA reductase (HMGCR) into mevalonate. In Sus scrofa (Pig), this protein is Hydroxymethylglutaryl-CoA synthase, mitochondrial (HMGCS2).